We begin with the raw amino-acid sequence, 387 residues long: 3-ketoacyl-CoA thiolase (387 aa).

Cys91 functions as the Acyl-thioester intermediate in the catalytic mechanism. Active-site proton acceptor residues include His343 and Cys373.

This sequence belongs to the thiolase-like superfamily. Thiolase family. Heterotetramer of two alpha chains (FadB) and two beta chains (FadA).

The protein resides in the cytoplasm. It catalyses the reaction an acyl-CoA + acetyl-CoA = a 3-oxoacyl-CoA + CoA. It functions in the pathway lipid metabolism; fatty acid beta-oxidation. Catalyzes the final step of fatty acid oxidation in which acetyl-CoA is released and the CoA ester of a fatty acid two carbons shorter is formed. This Yersinia pseudotuberculosis serotype O:1b (strain IP 31758) protein is 3-ketoacyl-CoA thiolase.